The sequence spans 792 residues: Alpha-1,6-mannosylglycoprotein 6-beta-N-acetylglucosaminyltransferase B (792 aa).

Topologically, residues 1 to 24 (MITVNPDGKIMVRRCLVTLRPFRL) are cytoplasmic. Residues 25–45 (FVLGIGFFTLCFLMTSLGGQF) form a helical; Signal-anchor for type II membrane protein membrane-spanning segment. The Lumenal segment spans residues 46–792 (SARRLGDSPF…GQVALCQGCL (747 aa)). N127 is a glycosylation site (N-linked (GlcNAc...) asparagine). 9 cysteine pairs are disulfide-bonded: C157-C195, C168-C208, C184-C353, C387-C644, C700-C775, C704-C777, C711-C764, C732-C753, and C788-C791.

Belongs to the glycosyltransferase 18 family. Mn(2+) is required as a cofactor. Predominantly expressed in brain. Expressed in all areas of the adult and fetal brain. Also expressed at much lower levels in testis, spleen and thymus.

The protein localises to the golgi apparatus membrane. It catalyses the reaction N(4)-{beta-D-GlcNAc-(1-&gt;2)-[beta-D-GlcNAc-(1-&gt;4)]-alpha-D-Man-(1-&gt;3)-[beta-D-GlcNAc-(1-&gt;2)-alpha-D-Man-(1-&gt;6)]-beta-D-Man-(1-&gt;4)-beta-D-GlcNAc-(1-&gt;4)-beta-D-GlcNAc}-L-asparaginyl-[protein] + UDP-N-acetyl-alpha-D-glucosamine = N(4)-{beta-D-GlcNAc-(1-&gt;2)-[beta-D-GlcNAc-(1-&gt;4)]-alpha-D-Man-(1-&gt;3)-[beta-D-GlcNAc-(1-&gt;2)-[beta-D-GlcNAc-(1-&gt;6)]-alpha-D-Man-(1-&gt;6)]-beta-D-Man-(1-&gt;4)-beta-D-GlcNAc-(1-&gt;4)-beta-D-GlcNAc}-L-asparaginyl-[protein] + UDP + H(+). It carries out the reaction 3-O-[N-acetyl-beta-D-glucosaminyl-(1-&gt;2)-alpha-D-mannosyl]-L-seryl-[protein] + UDP-N-acetyl-alpha-D-glucosamine = O(3)-{N-acetyl-beta-D-glucosaminyl-(1-&gt;2)-[N-acetyl-beta-D-glucosaminyl-(1-&gt;6)]-alpha-D-mannosyl}-L-seryl-[protein] + UDP + H(+). The catalysed reaction is 3-O-[N-acetyl-beta-D-glucosaminyl-(1-&gt;2)-alpha-D-mannosyl]-L-threonyl-[protein] + UDP-N-acetyl-alpha-D-glucosamine = O(3)-{N-acetyl-beta-D-glucosaminyl-(1-&gt;2)-[N-acetyl-beta-D-glucosaminyl-(1-&gt;6)]-alpha-D-mannosyl}-L-threonyl-[protein] + UDP + H(+). Its pathway is protein modification; protein glycosylation. Glycosyltransferase that acts on alpha-linked mannose of N-glycans and O-mannosyl glycans. Catalyzes the transfer of N-acetylglucosamine (GlcNAc) to the beta 1-6 linkage of the mannose residue of GlcNAc-beta1,2-Man-alpha on both the alpha1,3- and alpha1,6-linked mannose arms in the core structure of N-glycan. Also acts on the GlcNAc-beta1,2-Man-alpha1-Ser/Thr moiety, forming a 2,6-branched structure in brain O-mannosyl glycan. Plays an active role in modulating integrin and laminin-dependent adhesion and migration of neuronal cells via its activity in the O-mannosyl glycan pathway. The polypeptide is Alpha-1,6-mannosylglycoprotein 6-beta-N-acetylglucosaminyltransferase B (MGAT5B) (Homo sapiens (Human)).